The sequence spans 334 residues: Fructose-1,6-bisphosphatase class 1 (334 aa).

Mg(2+) is bound by residues glutamate 93, aspartate 117, leucine 119, and aspartate 120. Residues 120 to 123 (DGSS), asparagine 213, tyrosine 244, and lysine 274 contribute to the substrate site. Glutamate 280 provides a ligand contact to Mg(2+).

The protein belongs to the FBPase class 1 family. As to quaternary structure, homotetramer. The cofactor is Mg(2+).

It is found in the cytoplasm. The enzyme catalyses beta-D-fructose 1,6-bisphosphate + H2O = beta-D-fructose 6-phosphate + phosphate. It participates in carbohydrate biosynthesis; gluconeogenesis. The sequence is that of Fructose-1,6-bisphosphatase class 1 from Flavobacterium johnsoniae (strain ATCC 17061 / DSM 2064 / JCM 8514 / BCRC 14874 / CCUG 350202 / NBRC 14942 / NCIMB 11054 / UW101) (Cytophaga johnsonae).